The following is a 151-amino-acid chain: 3-hydroxyacyl-[acyl-carrier-protein] dehydratase FabZ (151 aa).

Residue His56 is part of the active site.

It belongs to the thioester dehydratase family. FabZ subfamily.

It is found in the cytoplasm. It catalyses the reaction a (3R)-hydroxyacyl-[ACP] = a (2E)-enoyl-[ACP] + H2O. Involved in unsaturated fatty acids biosynthesis. Catalyzes the dehydration of short chain beta-hydroxyacyl-ACPs and long chain saturated and unsaturated beta-hydroxyacyl-ACPs. In Nitrobacter hamburgensis (strain DSM 10229 / NCIMB 13809 / X14), this protein is 3-hydroxyacyl-[acyl-carrier-protein] dehydratase FabZ.